An 832-amino-acid chain; its full sequence is Translation initiation factor IF-2 (832 aa).

The tract at residues 1–249 (MSDDNDKPRT…GGGSSAPREK (249 aa)) is disordered. Pro residues predominate over residues 53 to 71 (TPAPAPEPAPEPAPAPAPA). Over residues 89–144 (PQERVARLQREAEEERLKLAEDARKRDDQKAKQNADDEKKRQEENKKAEEEAEKQA) the composition is skewed to basic and acidic residues. The segment covering 145–156 (AAEAEAAAAAEA) has biased composition (low complexity). Basic and acidic residues predominate over residues 180–200 (PEPKRPEKKKEEKKPARGGAK). Positions 333-503 (PRPPVVTIMG…ELQAELLELK (171 aa)) constitute a tr-type G domain. The tract at residues 342-349 (GHVDHGKT) is G1. Residue 342–349 (GHVDHGKT) coordinates GTP. The segment at 367 to 371 (GITQH) is G2. A G3 region spans residues 389–392 (DTPG). Residues 389-393 (DTPGH) and 443-446 (NKCD) each bind GTP. A G4 region spans residues 443-446 (NKCD). Residues 479 to 481 (SAT) form a G5 region.

It belongs to the TRAFAC class translation factor GTPase superfamily. Classic translation factor GTPase family. IF-2 subfamily.

It is found in the cytoplasm. One of the essential components for the initiation of protein synthesis. Protects formylmethionyl-tRNA from spontaneous hydrolysis and promotes its binding to the 30S ribosomal subunits. Also involved in the hydrolysis of GTP during the formation of the 70S ribosomal complex. The protein is Translation initiation factor IF-2 of Erythrobacter litoralis (strain HTCC2594).